The primary structure comprises 303 residues: Ribosomal protein uL3 glutamine methyltransferase (303 aa).

This sequence belongs to the protein N5-glutamine methyltransferase family. PrmB subfamily.

The catalysed reaction is L-glutaminyl-[ribosomal protein uL3] + S-adenosyl-L-methionine = N(5)-methyl-L-glutaminyl-[ribosomal protein uL3] + S-adenosyl-L-homocysteine + H(+). Functionally, methylates large ribosomal subunit protein uL3 on a specific glutamine residue. This Neisseria meningitidis serogroup A / serotype 4A (strain DSM 15465 / Z2491) protein is Ribosomal protein uL3 glutamine methyltransferase.